Here is a 544-residue protein sequence, read N- to C-terminus: Serine/threonine-protein kinase PAK 1 (544 aa).

The segment at Met1 to Ser79 is disordered. Ser2 is modified (N-acetylserine). Residue Ser21 is modified to Phosphoserine; by PKB and autocatalysis. Ser57 is subject to Phosphoserine; by autocatalysis. Positions Lys68–Ser79 are enriched in basic and acidic residues. The interval Lys70–Gln140 is autoregulatory region. One can recognise a CRIB domain in the interval Ile75 to Gly88. A GTPase-binding region spans residues Ile75–Arg105. The residue at position 84 (Thr84) is a Phosphothreonine; by OXSR1. Ser115 is subject to Phosphoserine. Phosphotyrosine is present on residues Tyr131 and Tyr142. Ser144 and Ser149 each carry phosphoserine; by autocatalysis. Polar residues predominate over residues Ala150–Glu166. The segment at Ala150–His195 is disordered. The residue at position 153 (Tyr153) is a Phosphotyrosine; by JAK2. Ser174 is subject to Phosphoserine. Residues Ser174–Ala183 show a composition bias toward acidic residues. Residue Thr184 is modified to Phosphothreonine. Phosphoserine; by autocatalysis is present on Ser198. Residue Tyr200 is modified to Phosphotyrosine; by JAK2. A Phosphoserine; by autocatalysis modification is found at Ser203. A disordered region spans residues Pro209–Glu250. 2 positions are modified to phosphothreonine: Thr211 and Thr218. 2 positions are modified to phosphoserine: Ser219 and Ser222. The segment covering Ser219–Pro230 has biased composition (polar residues). 3 positions are modified to phosphothreonine: Thr224, Thr228, and Thr229. The region spanning Tyr269–Leu520 is the Protein kinase domain. Ile275–Val283 contributes to the ATP binding site. Residue Tyr284 is modified to Phosphotyrosine; by JAK2. ATP is bound at residue Lys298. The active-site Proton acceptor is the Asp388. Thr422 is subject to Phosphothreonine; by autocatalysis, BRSK2 and PDPK1.

This sequence belongs to the protein kinase superfamily. STE Ser/Thr protein kinase family. STE20 subfamily. In terms of assembly, homodimer in its autoinhibited state. Active as monomer. Interacts with GIT1. Component of cytoplasmic complexes, which also contains PXN, ARHGEF7 and GIT1. Interacts with NISCH. Interacts with DVL1; mediates the formation of a DVL1, MUSK and PAK1 ternary complex involved in AChR clustering. Binds to the caspase-cleaved p110 isoform of CDC2L1 and CDC2L2, p110C, but not the full-length proteins. Interacts with ARHGEF7. Interacts with SCRIB. Interacts with PDPK1. Interacts (via kinase domain) with RAF1. Interacts with NCK1 and NCK2. Interacts with TBCB. Interacts with BRSK2. Interacts tightly with GTP-bound but not GDP-bound CDC42/P21 and RAC1. Interacts with SNAI1. Interacts with CIB1 (via N-terminal region); the interaction is direct, promotes PAK1 activity and occurs in a calcium-dependent manner. Interacts with INPP5K. Interacts with gamma-tubulin. Interacts with RHOU; the interaction promotes PAK1 activation. The cofactor is Mg(2+). Post-translationally, autophosphorylated in trans, meaning that in a dimer, one kinase molecule phosphorylates the other one. Activated by autophosphorylation at Thr-422 in response to a conformation change, triggered by interaction with GTP-bound CDC42 or RAC1. Activated by phosphorylation at Thr-422 by PDPK1. Phosphorylated by JAK2 in response to PRL; this increases PAK1 kinase activity. Phosphorylated at Ser-21 by PKB/AKT; this reduces interaction with NCK1 and association with focal adhesion sites. Activated by phosphorylation at Thr-422 by BRSK2. Upon DNA damage, phosphorylated at Thr-211 and translocates to the nucleoplasm. Phosphorylated at tyrosine residues, which can be enhanced by NTN1. Expressed predominantly in the brain, with higher expression in neuronal groups associated with motor function, and at lower levels in the spleen.

It localises to the cytoplasm. Its subcellular location is the cell junction. It is found in the focal adhesion. The protein localises to the cell projection. The protein resides in the lamellipodium. It localises to the cell membrane. Its subcellular location is the ruffle membrane. It is found in the invadopodium. The protein localises to the nucleus. The protein resides in the nucleoplasm. It localises to the chromosome. Its subcellular location is the cytoskeleton. It is found in the microtubule organizing center. The protein localises to the centrosome. It catalyses the reaction L-seryl-[protein] + ATP = O-phospho-L-seryl-[protein] + ADP + H(+). The catalysed reaction is L-threonyl-[protein] + ATP = O-phospho-L-threonyl-[protein] + ADP + H(+). Phosphorylation of Thr-84 by OXSR1 inhibits activation. Activated by binding small G proteins. Binding of GTP-bound CDC42 or RAC1 to the autoregulatory region releases monomers from the autoinhibited dimer, and enables activation by phosphorylation of Thr-422. In terms of biological role, protein kinase involved in intracellular signaling pathways downstream of integrins and receptor-type kinases that plays an important role in cytoskeleton dynamics, in cell adhesion, migration, proliferation, apoptosis, mitosis, and in vesicle-mediated transport processes. Can directly phosphorylate BAD and protects cells against apoptosis. Activated by interaction with CDC42 and RAC1. Functions as a GTPase effector that links the Rho-related GTPases CDC42 and RAC1 to the JNK MAP kinase pathway. Phosphorylates and activates MAP2K1, and thereby mediates activation of downstream MAP kinases. Involved in the reorganization of the actin cytoskeleton, actin stress fibers and of focal adhesion complexes. Phosphorylates the tubulin chaperone TBCB and thereby plays a role in the regulation of microtubule biogenesis and organization of the tubulin cytoskeleton. Plays a role in the regulation of insulin secretion in response to elevated glucose levels. Part of a ternary complex that contains PAK1, DVL1 and MUSK that is important for MUSK-dependent regulation of AChR clustering during the formation of the neuromuscular junction (NMJ). Activity is inhibited in cells undergoing apoptosis, potentially due to binding of CDC2L1 and CDC2L2. Phosphorylates MYL9/MLC2. Phosphorylates RAF1 at 'Ser-338' and 'Ser-339' resulting in: activation of RAF1, stimulation of RAF1 translocation to mitochondria, phosphorylation of BAD by RAF1, and RAF1 binding to BCL2. Phosphorylates SNAI1 at 'Ser-246' promoting its transcriptional repressor activity by increasing its accumulation in the nucleus. In podocytes, promotes NR3C2 nuclear localization. Required for atypical chemokine receptor ACKR2-induced phosphorylation of LIMK1 and cofilin (CFL1) and for the up-regulation of ACKR2 from endosomal compartment to cell membrane, increasing its efficiency in chemokine uptake and degradation. In synapses, seems to mediate the regulation of F-actin cluster formation performed by SHANK3, maybe through CFL1 phosphorylation and inactivation. Plays a role in RUFY3-mediated facilitating gastric cancer cells migration and invasion. In response to DNA damage, phosphorylates MORC2 which activates its ATPase activity and facilitates chromatin remodeling. In neurons, plays a crucial role in regulating GABA(A) receptor synaptic stability and hence GABAergic inhibitory synaptic transmission through its role in F-actin stabilization. In hippocampal neurons, necessary for the formation of dendritic spines and excitatory synapses; this function is dependent on kinase activity and may be exerted by the regulation of actomyosin contractility through the phosphorylation of myosin II regulatory light chain (MLC). Along with GIT1, positively regulates microtubule nucleation during interphase. Phosphorylates FXR1, promoting its localization to stress granules and activity. Phosphorylates ILK on 'Thr-173' and 'Ser-246', promoting nuclear export of ILK. This is Serine/threonine-protein kinase PAK 1 from Rattus norvegicus (Rat).